We begin with the raw amino-acid sequence, 361 residues long: Queuine tRNA-ribosyltransferase (361 aa).

Residue Asp-92 is the Proton acceptor of the active site. Substrate contacts are provided by residues 92 to 96 (DSGGF), Asp-146, Gln-189, and Gly-216. The interval 247-253 (GVGKPAD) is RNA binding. Catalysis depends on Asp-266, which acts as the Nucleophile. Residues 271–275 (TRAGR) are RNA binding; important for wobble base 34 recognition. 4 residues coordinate Zn(2+): Cys-304, Cys-306, Cys-309, and His-335.

It belongs to the queuine tRNA-ribosyltransferase family. As to quaternary structure, homodimer. Within each dimer, one monomer is responsible for RNA recognition and catalysis, while the other monomer binds to the replacement base PreQ1. The cofactor is Zn(2+).

It catalyses the reaction 7-aminomethyl-7-carbaguanine + guanosine(34) in tRNA = 7-aminomethyl-7-carbaguanosine(34) in tRNA + guanine. The protein operates within tRNA modification; tRNA-queuosine biosynthesis. Its function is as follows. Catalyzes the base-exchange of a guanine (G) residue with the queuine precursor 7-aminomethyl-7-deazaguanine (PreQ1) at position 34 (anticodon wobble position) in tRNAs with GU(N) anticodons (tRNA-Asp, -Asn, -His and -Tyr). Catalysis occurs through a double-displacement mechanism. The nucleophile active site attacks the C1' of nucleotide 34 to detach the guanine base from the RNA, forming a covalent enzyme-RNA intermediate. The proton acceptor active site deprotonates the incoming PreQ1, allowing a nucleophilic attack on the C1' of the ribose to form the product. After dissociation, two additional enzymatic reactions on the tRNA convert PreQ1 to queuine (Q), resulting in the hypermodified nucleoside queuosine (7-(((4,5-cis-dihydroxy-2-cyclopenten-1-yl)amino)methyl)-7-deazaguanosine). The sequence is that of Queuine tRNA-ribosyltransferase from Rickettsia massiliae (strain Mtu5).